The following is a 203-amino-acid chain: Snake venom metalloproteinase adamalysin-2 (203 aa).

Positions 7 to 203 (RYIELVVVAD…YKPQCILNKP (197 aa)) constitute a Peptidase M12B domain. Residues E10 and D94 each coordinate Ca(2+). Intrachain disulfides connect C118–C198 and C158–C165. H143 contributes to the Zn(2+) binding site. E144 is a catalytic residue. Residues H147 and H153 each contribute to the Zn(2+) site. Ca(2+) contacts are provided by C198 and N201.

It belongs to the venom metalloproteinase (M12B) family. P-I subfamily. In terms of assembly, monomer. Requires Zn(2+) as cofactor. As to expression, expressed by the venom gland.

The protein resides in the secreted. It catalyses the reaction Cleavage of 1-Phe-|-Val-2, 5-His-|-Leu-6, 14-Ala-|-Leu-15, 15-Leu-|-Tyr-16, and 16-Tyr-|-Leu-17 of insulin B chain.. Functionally, has no significant hemorrhagic activity, but inactivates serpins by limited proteolysis of their reactive-site loops. The sequence is that of Snake venom metalloproteinase adamalysin-2 from Crotalus adamanteus (Eastern diamondback rattlesnake).